The primary structure comprises 201 residues: ATP-dependent Clp protease proteolytic subunit (201 aa).

The active-site Nucleophile is Ser-101. His-126 is a catalytic residue.

Belongs to the peptidase S14 family. In terms of assembly, component of the chloroplastic Clp protease core complex.

Its subcellular location is the plastid. It localises to the chloroplast stroma. It catalyses the reaction Hydrolysis of proteins to small peptides in the presence of ATP and magnesium. alpha-casein is the usual test substrate. In the absence of ATP, only oligopeptides shorter than five residues are hydrolyzed (such as succinyl-Leu-Tyr-|-NHMec, and Leu-Tyr-Leu-|-Tyr-Trp, in which cleavage of the -Tyr-|-Leu- and -Tyr-|-Trp bonds also occurs).. Its function is as follows. Cleaves peptides in various proteins in a process that requires ATP hydrolysis. Has a chymotrypsin-like activity. Plays a major role in the degradation of misfolded proteins. The polypeptide is ATP-dependent Clp protease proteolytic subunit (Staurastrum punctulatum (Green alga)).